A 1085-amino-acid polypeptide reads, in one-letter code: Protein IFH1 (1085 aa).

6 disordered regions span residues 1–251 (MAGK…QQAL), 283–302 (KNKE…VMLG), 457–493 (SKLK…TSNV), 507–622 (DDEN…DSSV), 676–700 (VDDE…IGSK), and 747–774 (QLRE…GDEL). Polar residues-rich tracts occupy residues 9–18 (KSTINHSTHS) and 39–48 (RQSPPTLSTT). Low complexity predominate over residues 54-66 (SLIYSSESSLSDV). Residues 76-85 (NPHKIKRKAK) show a composition bias toward basic residues. Acidic residues predominate over residues 120–165 (DGEESENEEEESEEEEEDDDEDDDDDDDDGSDSDSDSETSSDDENI). The span at 184 to 197 (AMNTNSNTLYSSRE) shows a compositional bias: polar residues. S208 carries the post-translational modification Phosphoserine. Basic and acidic residues predominate over residues 209 to 239 (PKKENEEEQKEEKEKEKEEQQKQQESNKKEV). The span at 241-251 (GSGTTTTQQAL) shows a compositional bias: polar residues. The span at 283-297 (KNKENNGNEEDKLDS) shows a compositional bias: basic and acidic residues. Over residues 474-483 (QRRKLYKKTQ) the composition is skewed to basic residues. The span at 484-493 (KPSTRTTSNV) shows a compositional bias: polar residues. Over residues 513-524 (HKSKKGRHKSGK) the composition is skewed to basic residues. Positions 546–557 (STHSTVLNSGKY) are enriched in polar residues. Over residues 584–599 (ETSHDADTDEELRALD) the composition is skewed to basic and acidic residues. 2 stretches are compositionally biased toward acidic residues: residues 607–620 (TELD…DDDS) and 676–686 (VDDESTDEDDN). Positions 747 to 764 (QLREQHQRAQTPDVKREG) are enriched in basic and acidic residues. The residue at position 1041 (S1041) is a Phosphoserine.

It belongs to the IFH1 family.

The protein localises to the nucleus. Its function is as follows. Transcriptional coactivator that together with FHL1 regulates the expression of rRNA and ribosomal protein genes. Its activity is negatively regulated by environmental stress. The protein is Protein IFH1 (IFH1) of Saccharomyces cerevisiae (strain ATCC 204508 / S288c) (Baker's yeast).